A 96-amino-acid chain; its full sequence is UPF0298 protein LCA_1075 (96 aa).

This sequence belongs to the UPF0298 family.

It localises to the cytoplasm. This is UPF0298 protein LCA_1075 from Latilactobacillus sakei subsp. sakei (strain 23K) (Lactobacillus sakei subsp. sakei).